Here is a 422-residue protein sequence, read N- to C-terminus: MAVGLLLLAAGVGSRLSSSLPKAFVSVGGLDLIQWCLKNLGQLRTALEVVVTVPKGFVELCERNVLQSLGTLEKIKIVTGGATRQDSVGLGIRYFSARITKLLVHDVARAFTPPEIYLSVIKQLETSKAVIPVIAIVDSIKKVNMQDAYREVARGPGEPFHTKSVLHLDRREFFSAQTPQGFDRALLEAAHERSVASNEQFADDSVMVAQIEKDITLINGHEASFKVTNPCDLQRAEFAASSLLSKSNVSPVNISQPPISALSMPLPLIGVGIDFHKFILDESPLFLACLEWKNYRRLQGHSDGDVVAHACTTALLSAANMGDIGSVFGVDLAATKDASGAYFLESTNRLLATNGFCVLNIAVQVISNTPRLADRRVEAEHAISDCLSGARISLSSVTTDGMGFLGRGEGIGAIAVAQIYHR.

The segment at 1–267 (MAVGLLLLAA…PISALSMPLP (267 aa)) is 2-C-methyl-D-erythritol 4-phosphate cytidylyltransferase. The segment at 268–422 (LIGVGIDFHK…AIAVAQIYHR (155 aa)) is 2-C-methyl-D-erythritol 2,4-cyclodiphosphate synthase. Residues D274 and H276 each contribute to the a divalent metal cation site. Residues 274 to 276 (DFH) and 301 to 302 (HS) contribute to the 4-CDP-2-C-methyl-D-erythritol 2-phosphate site. An a divalent metal cation-binding site is contributed by H309. Residues 323-325 (DIG), F404, and R407 each bind 4-CDP-2-C-methyl-D-erythritol 2-phosphate.

This sequence in the N-terminal section; belongs to the IspD/TarI cytidylyltransferase family. IspD subfamily. It in the C-terminal section; belongs to the IspF family. A divalent metal cation is required as a cofactor.

It catalyses the reaction 2-C-methyl-D-erythritol 4-phosphate + CTP + H(+) = 4-CDP-2-C-methyl-D-erythritol + diphosphate. It carries out the reaction 4-CDP-2-C-methyl-D-erythritol 2-phosphate = 2-C-methyl-D-erythritol 2,4-cyclic diphosphate + CMP. Its pathway is isoprenoid biosynthesis; isopentenyl diphosphate biosynthesis via DXP pathway; isopentenyl diphosphate from 1-deoxy-D-xylulose 5-phosphate: step 2/6. It functions in the pathway isoprenoid biosynthesis; isopentenyl diphosphate biosynthesis via DXP pathway; isopentenyl diphosphate from 1-deoxy-D-xylulose 5-phosphate: step 4/6. Bifunctional enzyme that catalyzes the formation of 4-diphosphocytidyl-2-C-methyl-D-erythritol from CTP and 2-C-methyl-D-erythritol 4-phosphate (MEP) (IspD), and catalyzes the conversion of 4-diphosphocytidyl-2-C-methyl-D-erythritol 2-phosphate (CDP-ME2P) to 2-C-methyl-D-erythritol 2,4-cyclodiphosphate (ME-CPP) with a corresponding release of cytidine 5-monophosphate (CMP) (IspF). This chain is Bifunctional enzyme IspD/IspF, found in Tropheryma whipplei (strain TW08/27) (Whipple's bacillus).